A 308-amino-acid polypeptide reads, in one-letter code: GMP synthase [glutamine-hydrolyzing] subunit B (308 aa).

The region spanning 1 to 185 (MNWEKFVEEK…LGLPEKIYNR (185 aa)) is the GMPS ATP-PPase domain. 28 to 34 (SGGVDSS) contacts ATP.

Heterodimer composed of a glutamine amidotransferase subunit (A) and a GMP-binding subunit (B).

It catalyses the reaction XMP + L-glutamine + ATP + H2O = GMP + L-glutamate + AMP + diphosphate + 2 H(+). It participates in purine metabolism; GMP biosynthesis; GMP from XMP (L-Gln route): step 1/1. Catalyzes the synthesis of GMP from XMP. This Pyrococcus abyssi (strain GE5 / Orsay) protein is GMP synthase [glutamine-hydrolyzing] subunit B (guaAB).